The sequence spans 248 residues: 4-hydroxy-tetrahydrodipicolinate reductase (248 aa).

NAD(+) is bound by residues 9 to 14 (GAKGRV), 77 to 79 (GTT), and 104 to 107 (APNF). Histidine 134 acts as the Proton donor/acceptor in catalysis. Position 135 (histidine 135) interacts with (S)-2,3,4,5-tetrahydrodipicolinate. Lysine 138 functions as the Proton donor in the catalytic mechanism. Residue 144 to 145 (GT) coordinates (S)-2,3,4,5-tetrahydrodipicolinate.

It belongs to the DapB family.

It localises to the cytoplasm. The catalysed reaction is (S)-2,3,4,5-tetrahydrodipicolinate + NAD(+) + H2O = (2S,4S)-4-hydroxy-2,3,4,5-tetrahydrodipicolinate + NADH + H(+). It catalyses the reaction (S)-2,3,4,5-tetrahydrodipicolinate + NADP(+) + H2O = (2S,4S)-4-hydroxy-2,3,4,5-tetrahydrodipicolinate + NADPH + H(+). Its pathway is amino-acid biosynthesis; L-lysine biosynthesis via DAP pathway; (S)-tetrahydrodipicolinate from L-aspartate: step 4/4. Its function is as follows. Catalyzes the conversion of 4-hydroxy-tetrahydrodipicolinate (HTPA) to tetrahydrodipicolinate. The polypeptide is 4-hydroxy-tetrahydrodipicolinate reductase (Corynebacterium efficiens (strain DSM 44549 / YS-314 / AJ 12310 / JCM 11189 / NBRC 100395)).